A 483-amino-acid polypeptide reads, in one-letter code: Glutamyl-tRNA(Gln) amidotransferase subunit A (483 aa).

Residues Lys76 and Ser151 each act as charge relay system in the active site. The active-site Acyl-ester intermediate is the Ser175.

The protein belongs to the amidase family. GatA subfamily. Heterotrimer of A, B and C subunits.

The catalysed reaction is L-glutamyl-tRNA(Gln) + L-glutamine + ATP + H2O = L-glutaminyl-tRNA(Gln) + L-glutamate + ADP + phosphate + H(+). Functionally, allows the formation of correctly charged Gln-tRNA(Gln) through the transamidation of misacylated Glu-tRNA(Gln) in organisms which lack glutaminyl-tRNA synthetase. The reaction takes place in the presence of glutamine and ATP through an activated gamma-phospho-Glu-tRNA(Gln). The protein is Glutamyl-tRNA(Gln) amidotransferase subunit A of Ectopseudomonas mendocina (strain ymp) (Pseudomonas mendocina).